Consider the following 253-residue polypeptide: MGVGIQVRDLNAYYGKAHVLKHVDMKMAPNHVTALIGPSGCGKSTFVRCLNRMHETIPEAYAEGEVLVGDKDIYARGTAAVDVRRRVGMVFQKPNPFPTMSIYDNVASGLKLNGIRKKAVLDEAVQRSLEASALWNEVKDHLHKKSGASLSGGQQQRLCIARALAVQPDVLLMDEPASALDPISTSKIEELMFTLKENYTVVVVTHNMQQAARVAEYTGFFLMGSVIEFDTTQKIFTTPSDKRTEDYITGRFG.

Positions 5–248 constitute an ABC transporter domain; that stretch reads IQVRDLNAYY…PSDKRTEDYI (244 aa). 37–44 contributes to the ATP binding site; the sequence is GPSGCGKS.

It belongs to the ABC transporter superfamily. Phosphate importer (TC 3.A.1.7) family. The complex is composed of two ATP-binding proteins (PstB), two transmembrane proteins (PstC and PstA) and a solute-binding protein (PstS).

It is found in the cell inner membrane. The enzyme catalyses phosphate(out) + ATP + H2O = ADP + 2 phosphate(in) + H(+). Its function is as follows. Part of the ABC transporter complex PstSACB involved in phosphate import. Responsible for energy coupling to the transport system. In Koribacter versatilis (strain Ellin345), this protein is Phosphate import ATP-binding protein PstB.